Consider the following 327-residue polypeptide: o-succinylbenzoate synthase (327 aa).

Residue Lys-110 is the Proton donor of the active site. Residues Asp-138, Glu-165, and Asp-188 each coordinate Mg(2+). Lys-212 (proton acceptor) is an active-site residue.

Belongs to the mandelate racemase/muconate lactonizing enzyme family. MenC type 1 subfamily. Requires a divalent metal cation as cofactor.

It catalyses the reaction (1R,6R)-6-hydroxy-2-succinyl-cyclohexa-2,4-diene-1-carboxylate = 2-succinylbenzoate + H2O. It functions in the pathway quinol/quinone metabolism; 1,4-dihydroxy-2-naphthoate biosynthesis; 1,4-dihydroxy-2-naphthoate from chorismate: step 4/7. It participates in quinol/quinone metabolism; menaquinone biosynthesis. Functionally, converts 2-succinyl-6-hydroxy-2,4-cyclohexadiene-1-carboxylate (SHCHC) to 2-succinylbenzoate (OSB). In Mycobacterium ulcerans (strain Agy99), this protein is o-succinylbenzoate synthase.